Here is a 101-residue protein sequence, read N- to C-terminus: Small ribosomal subunit protein uS14 (101 aa).

Belongs to the universal ribosomal protein uS14 family. As to quaternary structure, part of the 30S ribosomal subunit. Contacts proteins S3 and S10.

Binds 16S rRNA, required for the assembly of 30S particles and may also be responsible for determining the conformation of the 16S rRNA at the A site. The polypeptide is Small ribosomal subunit protein uS14 (Francisella tularensis subsp. novicida (strain U112)).